The primary structure comprises 1386 residues: DNA-directed RNA polymerase subunit beta' (1386 aa).

Cys-75, Cys-77, Cys-90, and Cys-93 together coordinate Zn(2+). Asp-466, Asp-468, and Asp-470 together coordinate Mg(2+). Positions 809, 883, 890, and 893 each coordinate Zn(2+).

It belongs to the RNA polymerase beta' chain family. As to quaternary structure, the RNAP catalytic core consists of 2 alpha, 1 beta, 1 beta' and 1 omega subunit. When a sigma factor is associated with the core the holoenzyme is formed, which can initiate transcription. Requires Mg(2+) as cofactor. Zn(2+) is required as a cofactor.

It carries out the reaction RNA(n) + a ribonucleoside 5'-triphosphate = RNA(n+1) + diphosphate. Functionally, DNA-dependent RNA polymerase catalyzes the transcription of DNA into RNA using the four ribonucleoside triphosphates as substrates. In Oleidesulfovibrio alaskensis (strain ATCC BAA-1058 / DSM 17464 / G20) (Desulfovibrio alaskensis), this protein is DNA-directed RNA polymerase subunit beta'.